Consider the following 141-residue polypeptide: Large ribosomal subunit protein uL11 (141 aa).

This sequence belongs to the universal ribosomal protein uL11 family. In terms of assembly, part of the ribosomal stalk of the 50S ribosomal subunit. Interacts with L10 and the large rRNA to form the base of the stalk. L10 forms an elongated spine to which L12 dimers bind in a sequential fashion forming a multimeric L10(L12)X complex. One or more lysine residues are methylated.

Functionally, forms part of the ribosomal stalk which helps the ribosome interact with GTP-bound translation factors. The sequence is that of Large ribosomal subunit protein uL11 from Herpetosiphon aurantiacus (strain ATCC 23779 / DSM 785 / 114-95).